We begin with the raw amino-acid sequence, 301 residues long: D-alanine--D-alanine ligase (301 aa).

Residues 99–294 (KCILKAANIR…FPELIDMIID (196 aa)) enclose the ATP-grasp domain. ATP is bound at residue 126–181 (IEKMGYPVVVKPTHGGSSVATFIIKEEKDIKDAVIEGFKWDSEVIIEKFIKGDEIT). Aspartate 248, glutamate 261, and asparagine 263 together coordinate Mg(2+).

This sequence belongs to the D-alanine--D-alanine ligase family. Mg(2+) is required as a cofactor. Mn(2+) serves as cofactor.

It is found in the cytoplasm. The catalysed reaction is 2 D-alanine + ATP = D-alanyl-D-alanine + ADP + phosphate + H(+). It participates in cell wall biogenesis; peptidoglycan biosynthesis. Functionally, cell wall formation. The sequence is that of D-alanine--D-alanine ligase from Clostridium botulinum (strain Alaska E43 / Type E3).